The following is a 591-amino-acid chain: L-lactate dehydrogenase (cytochrome) (591 aa).

The N-terminal 80 residues, 1 to 80 (MLKYKPLLKI…LNWHNGQIDN (80 aa)), are a transit peptide targeting the mitochondrion. In terms of domain architecture, Cytochrome b5 heme-binding spans 88–165 (KQKISPAEVA…APEKKLGPLQ (78 aa)). The heme b site is built by His123, His146, Tyr177, Gln219, and Tyr223. The 367-residue stretch at 197 to 563 (PPLDNIINLY…KPDLLDLSTL (367 aa)) folds into the FMN hydroxy acid dehydrogenase domain. Tyr223 is a pyruvate binding site. FMN is bound by residues 275-278 (SATA), Ser308, and Gln332. Position 334 (Tyr334) interacts with pyruvate. Thr360 provides a ligand contact to FMN. A heme b-binding site is contributed by Lys376. Residue Lys429 coordinates FMN. Pyruvate contacts are provided by His453 and Arg456. His453 functions as the Proton acceptor in the catalytic mechanism. FMN is bound by residues 489–493 (DGGVR) and 512–513 (GR).

In the N-terminal section; belongs to the cytochrome b5 family. The protein in the C-terminal section; belongs to the FMN-dependent alpha-hydroxy acid dehydrogenase family. As to quaternary structure, homotetramer. FMN is required as a cofactor. The cofactor is heme b.

The protein resides in the mitochondrion intermembrane space. It catalyses the reaction (S)-lactate + 2 Fe(III)-[cytochrome c] = 2 Fe(II)-[cytochrome c] + pyruvate + 2 H(+). Catalyzes the oxidation of (S)-lactate (L-lactate) to pyruvate with subsequent transfer of electrons to cytochrome c. Is involved in the utilization of (S)-lactate as a sole source of carbon for growth. Can also use ferricyanide as an electron acceptor in vitro. This Saccharomyces cerevisiae (strain ATCC 204508 / S288c) (Baker's yeast) protein is L-lactate dehydrogenase (cytochrome) (CYB2).